We begin with the raw amino-acid sequence, 818 residues long: IQ and AAA domain-containing protein 1-like (818 aa).

Residues 206-235 (QGQAAVTIQKVWKGYLQRKRTQQDRRMEME) form the IQ domain. 2 disordered regions span residues 344 to 377 (QMQENRKKEQEKSKEKGKDEKEKKKGKEEKAKKG) and 458 to 482 (EERPLRAPKKTPGKKTGKKKEKDLT). Basic residues predominate over residues 463 to 476 (RAPKKTPGKKTGKK). 567–574 (GPSGMGKK) provides a ligand contact to ATP. The interval 795–818 (SMKHRMDQLEAEEAKLDKEKKKRK) is disordered. Basic and acidic residues predominate over residues 798–818 (HRMDQLEAEEAKLDKEKKKRK).

The protein belongs to the AAA ATPase family.

The protein is IQ and AAA domain-containing protein 1-like (IQCA1L) of Homo sapiens (Human).